The chain runs to 328 residues: uncharacterized protein (328 aa).

A DNA-binding region (H-T-H motif) is located at residues 72–91; it reads ALQIRDKFNLQRVIIVPDGE.

The protein belongs to the SorC transcriptional regulatory family.

This is an uncharacterized protein from Escherichia coli (strain K12).